The following is a 161-amino-acid chain: TRAF-interacting protein with FHA domain-containing protein B (161 aa).

Positions Leu36–Leu91 constitute an FHA domain.

As to quaternary structure, interacts with TIFA.

Functionally, inhibits TIFA-mediated TRAF6 activation possibly by inducing a conformational change in TIFA. This Homo sapiens (Human) protein is TRAF-interacting protein with FHA domain-containing protein B.